The sequence spans 2476 residues: Transcriptional regulator ATRX (2476 aa).

A Glycyl lysine isopeptide (Lys-Gly) (interchain with G-Cter in SUMO2) cross-link involves residue lysine 10. The segment at 24–154 (HSSEESEETC…FRSRSKMKAD (131 aa)) is disordered. Phosphoserine occurs at positions 25 and 34. Residues 40–57 (MNQSTDKICGSGLNSDMM) are compositionally biased toward polar residues. Over residues 58–72 (ENNKEEGASTSEKSR) the composition is skewed to basic and acidic residues. The residue at position 89 (tyrosine 89) is a Phosphotyrosine. Phosphoserine is present on serine 92. A compositionally biased stretch (basic and acidic residues) spans 98-107 (TDENVNEKAA). The span at 108-121 (TENSENDITMQSLP) shows a compositional bias: polar residues. Serine 111 is subject to Phosphoserine. Basic and acidic residues predominate over residues 134–154 (NEDKDDFKGPEFRSRSKMKAD). Glycyl lysine isopeptide (Lys-Gly) (interchain with G-Cter in SUMO2) cross-links involve residues lysine 137 and lysine 141. In terms of domain architecture, ADD spans 158 to 295 (KRGEDGLHGI…LEQLLQQNKK (138 aa)). The GATA-type; atypical zinc finger occupies 169–205 (SCTACGQQVNHFQKDSIYRHPSLKVLICKNCFKYYMS). Position 212 is a phosphoserine (serine 212). Residues 216–271 (DEQCRWCAEGGNLICCDFCHNAFCKKCILRNLGRKELSTIMDENNQWYCYICQPEP) form a PHD-type; atypical zinc finger. Residue lysine 298 forms a Glycyl lysine isopeptide (Lys-Gly) (interchain with G-Cter in SUMO2) linkage. At serine 315 the chain carries Phosphoserine. 3 disordered regions span residues 427–451 (EKNTKDLKSTDAKSETKLGKGEKSY), 466–507 (SVKA…DLDM), and 525–568 (ESAM…NIKS). Lysine 439 is covalently cross-linked (Glycyl lysine isopeptide (Lys-Gly) (interchain with G-Cter in SUMO2)). Residues 466–494 (SVKAIDGEEQRAHKSTSGEHKGSGRKDGS) are compositionally biased toward basic and acidic residues. The span at 549–559 (ESSSVKLNVSS) shows a compositional bias: polar residues. The PxVxL motif signature appears at 573-586 (KVRKELFVKLTPVS). Threonine 583 bears the Phosphothreonine mark. Disordered regions lie at residues 585 to 877 (VSLS…GGSI) and 893 to 1464 (PGVS…GRKK). Serine 586, serine 590, serine 626, serine 663, serine 665, serine 717, and serine 719 each carry phosphoserine. Residues 615–630 (SSEKCRPREEISDHEN) show a composition bias toward basic and acidic residues. The segment covering 732-746 (MGHSSSSDTDINEPQ) has biased composition (polar residues). Phosphoserine occurs at positions 766, 801, 828, 829, 854, 855, and 871. Basic and acidic residues predominate over residues 819–849 (SVPEKKEEDSSEDEKQGKKVVDNGGHERAKT). Residues 899 to 922 (GAEKPSVKEENVNSPEDKRVSKTK) show a composition bias toward basic and acidic residues. Residues 923–937 (EKTKHLRSRQSRKGK) show a composition bias toward basic residues. 2 positions are modified to phosphoserine: serine 941 and serine 953. Over residues 943–963 (GTDRFPKKEQSDESSEGEKKQ) the composition is skewed to basic and acidic residues. The segment covering 964 to 973 (SRQRPGTKGK) has biased composition (basic residues). Over residues 974 to 988 (KAPDLKGETLKREQE) the composition is skewed to basic and acidic residues. Lysine 984 is covalently cross-linked (Glycyl lysine isopeptide (Lys-Gly) (interchain with G-Cter in SUMO2)). Serine 991, serine 992, serine 993, and serine 1041 each carry phosphoserine. A compositionally biased stretch (basic and acidic residues) spans 1031–1061 (DKSCEKKEELSDSVDKLPGKGDSCDSSEDKK). Over residues 1062–1074 (TRNRVSLREKKRF) the composition is skewed to basic residues. At arginine 1063 the chain carries Citrulline. Basic and acidic residues-rich tracts occupy residues 1083–1096 (KRPECSSSDTEKSL) and 1103–1129 (STEKRPKRIDLRERRNSSSKRNTKEVK). Residues 1146 to 1175 (KQKKQRTSAKKKTGNTKEKKRNSLRATPKR) show a composition bias toward basic residues. Residues 1169–1313 (LRATPKRKQV…VNQVNSESDS (145 aa)) form an interaction with DAXX region. 3 positions are modified to phosphoserine: serine 1223, serine 1224, and serine 1232. The segment covering 1246 to 1260 (PENRIAKKMLLEEIK) has biased composition (basic and acidic residues). Residues 1265 to 1276 (SDEDGSSDDEPD) show a composition bias toward acidic residues. 3 positions are modified to phosphoserine: serine 1309, serine 1311, and serine 1313. Over residues 1321-1332 (PRYRHRLLRHKL) the composition is skewed to basic residues. Residues serine 1335 and serine 1339 each carry the phosphoserine modification. Composition is skewed to basic and acidic residues over residues 1340–1355 (GEEKPTKPKEHKEAKG) and 1395–1404 (KKAELEENQR). The span at 1406 to 1415 (YKQKKKRRRI) shows a compositional bias: basic residues. The span at 1416–1436 (KVQEDSSSENKSHSEEDKKEG) shows a compositional bias: basic and acidic residues. Positions 1437-1453 (DEEDEEDEDEDEEDEND) are enriched in acidic residues. Residue lysine 1473 forms a Glycyl lysine isopeptide (Lys-Gly) (interchain with G-Cter in SUMO2) linkage. Serine 1512 is modified (phosphoserine). Threonine 1514 is modified (phosphothreonine). One can recognise a Helicase ATP-binding domain in the interval 1566-1753 (KTKKSPGSGC…HCMVNFIKEN (188 aa)). An ATP-binding site is contributed by 1579–1586 (HCMGLGKT). A DEGH box motif is present at residues 1704–1707 (DEGH). Serine 1891 and serine 1898 each carry phosphoserine. A disordered region spans residues 1898 to 1982 (SDSDETSKSL…STSNPSSPAP (85 aa)). Residues 1902–1913 (ETSKSLSSDEKK) are compositionally biased toward basic and acidic residues. Residue lysine 1965 forms a Glycyl lysine isopeptide (Lys-Gly) (interchain with G-Cter in SUMO1); alternate linkage. Residue lysine 1965 forms a Glycyl lysine isopeptide (Lys-Gly) (interchain with G-Cter in SUMO2); alternate linkage. Lysine 1970 participates in a covalent cross-link: Glycyl lysine isopeptide (Lys-Gly) (interchain with G-Cter in SUMO2). The segment covering 1971 to 1982 (TTSTSNPSSPAP) has biased composition (low complexity). Phosphoserine occurs at positions 1975 and 1979. The interval 1993-2263 (DAEVLEHSGK…RKAAWAEYEA (271 aa)) is interaction with MECP2. The 181-residue stretch at 2008–2188 (EILRMAEEIG…ERHFTMNELT (181 aa)) folds into the Helicase C-terminal domain. Serine 2203 carries the phosphoserine modification. Residues 2445-2476 (SVAGGMQPPPLQRAPPPTVRSKNPGPSPGKSM) are disordered. Residues 2451-2462 (QPPPLQRAPPPT) are compositionally biased toward pro residues. 2 positions are modified to omega-N-methylarginine: arginine 2457 and arginine 2464.

The protein belongs to the SNF2/RAD54 helicase family. In terms of assembly, interacts with DAXX to form the chromatin remodeling complex ATRX:DAXX. Probably binds EZH2. Binds annexin V in a calcium and phosphatidylcholine/phosphatidylserine-dependent manner. Interacts directly with CBX5 via the PxVxL motif. Interacts with RAD50, MRE11 and NBN; indicative for an association with the MRN complex. Interacts with histone MACROH2A1. Interacts with histone H3 peptides methylated at 'Lys-10' with preferences H3K9me3 &gt; H3K9me2 &gt; H3K9me1. Interacts with histone H3 peptides unmethylated at 'Lys-5' (H3K4me0). Interacts with MECP2, SMC1 and SMC3. Interacts with SETDB1, TRIM28 and ZNF274. Post-translationally, citrullinated by PADI4.

It localises to the nucleus. Its subcellular location is the chromosome. It is found in the telomere. The protein localises to the PML body. The catalysed reaction is ATP + H2O = ADP + phosphate + H(+). In terms of biological role, involved in transcriptional regulation and chromatin remodeling. Facilitates DNA replication in multiple cellular environments and is required for efficient replication of a subset of genomic loci. Binds to DNA tandem repeat sequences in both telomeres and euchromatin and in vitro binds DNA quadruplex structures. May help stabilizing G-rich regions into regular chromatin structures by remodeling G4 DNA and incorporating H3.3-containing nucleosomes. Catalytic component of the chromatin remodeling complex ATRX:DAXX which has ATP-dependent DNA translocase activity and catalyzes the replication-independent deposition of histone H3.3 in pericentric DNA repeats outside S-phase and telomeres, and the in vitro remodeling of H3.3-containing nucleosomes. Its heterochromatin targeting is proposed to involve a combinatorial readout of histone H3 modifications (specifically methylation states of H3K9 and H3K4) and association with CBX5. Involved in maintaining telomere structural integrity in embryonic stem cells probably implying recruitment of CBX5 to telomeres. Reports on the involvement in transcriptional regulation of telomeric repeat-containing RNA (TERRA) are conflicting; according is required for its transcriptional repression in embryonic stem cells. Acts as a negative regulator of chromatin incorporation of transcriptionally repressive histone MACROH2A1, particularily at telomeres. Participates in the allele-specific gene expression at the imprinted IGF2/H19 gene locus. On the maternal allele, required for the chromatin occupancy of SMC1 and CTCTF within the H19 imprinting control region (ICR) and involved in esatblishment of histone tails modifications in the ICR. Binds to zinc-finger coding genes with atypical chromatin signatures and regulates its H3K9me3 levels. Forms a complex with ZNF274, TRIM28 and SETDB1 to facilitate the deposition and maintenance of H3K9me3 at the 3' exons of zinc-finger genes. The sequence is that of Transcriptional regulator ATRX (Atrx) from Mus musculus (Mouse).